Reading from the N-terminus, the 207-residue chain is Outer-membrane lipoprotein LolB (207 aa).

An N-terminal signal peptide occupies residues 1-21; the sequence is MPMRKRHFYRLLPLASLLLAA. The N-palmitoyl cysteine moiety is linked to residue cysteine 22. Cysteine 22 is lipidated: S-diacylglycerol cysteine.

This sequence belongs to the LolB family. As to quaternary structure, monomer.

It is found in the cell outer membrane. In terms of biological role, plays a critical role in the incorporation of lipoproteins in the outer membrane after they are released by the LolA protein. In Yersinia pseudotuberculosis serotype O:1b (strain IP 31758), this protein is Outer-membrane lipoprotein LolB.